We begin with the raw amino-acid sequence, 146 residues long: MSDIQLNTLKPAEGSKHAKRRVGRGIGSGLGKTAGRGHKGQKSRSGGFHKVGFEGGQMPLQRRLPKRGFTPLGQHLYAEVRPSELQLMEAEEIDVQALKAAGVVGQSVRYAKVIKSGELSRKVVLRGITATAGARAAIEAAGGSLA.

Residues methionine 1–proline 65 are disordered. Gly residues predominate over residues arginine 24 to alanine 34.

It belongs to the universal ribosomal protein uL15 family. Part of the 50S ribosomal subunit.

Its function is as follows. Binds to the 23S rRNA. The chain is Large ribosomal subunit protein uL15 from Bordetella parapertussis (strain 12822 / ATCC BAA-587 / NCTC 13253).